The chain runs to 460 residues: Lipase member H-A (460 aa).

The first 26 residues, 1–26 (MLLSFYFNGLLLVGCLLSWGRSDTEG), serve as a signal peptide directing secretion. N-linked (GlcNAc...) asparagine glycans are attached at residues N67 and N75. S163 acts as the Nucleophile in catalysis. N-linked (GlcNAc...) asparagine glycosylation is present at N177. The Charge relay system role is filled by D187. Cysteines 242 and 255 form a disulfide. Catalysis depends on H257, which acts as the Charge relay system. 2 cysteine pairs are disulfide-bonded: C279–C290 and C293–C301. The N-linked (GlcNAc...) asparagine glycan is linked to N289. N-linked (GlcNAc...) asparagine glycosylation is present at N366. The cysteines at positions 436 and 455 are disulfide-linked.

The protein belongs to the AB hydrolase superfamily. Lipase family.

The protein localises to the secreted. It is found in the cell membrane. It catalyses the reaction 1-hexadecanoyl-2-(9Z-octadecenoyl)-sn-glycero-3-phosphate + H2O = 2-(9Z-octadecenoyl)-sn-glycero-3-phosphate + hexadecanoate + H(+). Hydrolyzes specifically phosphatidic acid (PA) to produce 2-acyl lysophosphatidic acid (LPA; a potent bioactive lipid mediator) and fatty acid. Does not hydrolyze other phospholipids, like phosphatidylserine (PS), phosphatidylcholine (PC) and phosphatidylethanolamine (PE) or triacylglycerol (TG). The polypeptide is Lipase member H-A (liph-a) (Xenopus laevis (African clawed frog)).